The sequence spans 78 residues: Conotoxin Bu2 (78 aa).

Residues 1 to 19 (MKLTCVLIIAVLFLTAITA) form the signal peptide. Residues 20-41 (DDSRDKQVYRAVGLIDKMRRIR) constitute a propeptide that is removed on maturation. Disulfide bonds link cysteine 46-cysteine 59, cysteine 53-cysteine 64, and cysteine 58-cysteine 73.

This sequence belongs to the conotoxin O1 superfamily. Expressed by the venom duct.

The protein resides in the secreted. The chain is Conotoxin Bu2 from Conus bullatus (Bubble cone).